We begin with the raw amino-acid sequence, 468 residues long: ATP synthase subunit beta (468 aa).

148-155 (GGAGVGKT) provides a ligand contact to ATP.

It belongs to the ATPase alpha/beta chains family. In terms of assembly, F-type ATPases have 2 components, CF(1) - the catalytic core - and CF(0) - the membrane proton channel. CF(1) has five subunits: alpha(3), beta(3), gamma(1), delta(1), epsilon(1). CF(0) has three main subunits: a(1), b(2) and c(9-12). The alpha and beta chains form an alternating ring which encloses part of the gamma chain. CF(1) is attached to CF(0) by a central stalk formed by the gamma and epsilon chains, while a peripheral stalk is formed by the delta and b chains.

The protein resides in the cell membrane. The catalysed reaction is ATP + H2O + 4 H(+)(in) = ADP + phosphate + 5 H(+)(out). In terms of biological role, produces ATP from ADP in the presence of a proton gradient across the membrane. The catalytic sites are hosted primarily by the beta subunits. This chain is ATP synthase subunit beta, found in Stenotrophomonas maltophilia (strain K279a).